We begin with the raw amino-acid sequence, 388 residues long: Galactokinase (388 aa).

Position 33–36 (33–36) interacts with substrate; that stretch reads EHTD. ATP-binding positions include Ser67 and 124–130; that span reads GSGLSSS. Mg(2+)-binding residues include Ser130 and Glu162. Residue Asp174 is the Proton acceptor of the active site. Tyr224 lines the substrate pocket.

It belongs to the GHMP kinase family. GalK subfamily.

The protein resides in the cytoplasm. The enzyme catalyses alpha-D-galactose + ATP = alpha-D-galactose 1-phosphate + ADP + H(+). It functions in the pathway carbohydrate metabolism; galactose metabolism. Its function is as follows. Catalyzes the transfer of the gamma-phosphate of ATP to D-galactose to form alpha-D-galactose-1-phosphate (Gal-1-P). The polypeptide is Galactokinase (Streptococcus thermophilus).